The following is a 64-amino-acid chain: Large ribosomal subunit protein bL35 (64 aa).

It belongs to the bacterial ribosomal protein bL35 family.

This Shewanella oneidensis (strain ATCC 700550 / JCM 31522 / CIP 106686 / LMG 19005 / NCIMB 14063 / MR-1) protein is Large ribosomal subunit protein bL35.